We begin with the raw amino-acid sequence, 162 residues long: uncharacterized protein (162 aa).

This is an uncharacterized protein from Frog virus 3 (isolate Goorha) (FV-3).